The chain runs to 379 residues: Sperm microtubule associated protein 2 (379 aa).

The tract at residues 1–82 (MGDSRRRSLG…EFPETLDPKE (82 aa)) is disordered. 2 stretches are compositionally biased toward basic and acidic residues: residues 19-29 (GRSEREQDGDP) and 38-50 (ESRR…RQDL). A compositionally biased stretch (acidic residues) spans 56–76 (GPEDPEEELPPEEVAGEEFPE). THEG repeat units follow at residues 118–137 (KARK…PKIN), 184–203 (TITV…PKRF), 222–241 (SSLE…PKIR), 258–277 (AAQM…PKAP), 290–309 (PKPH…PKAQ), and 326–345 (VTKK…PKVR). Ser295 bears the Phosphoserine mark. Residues 344 to 379 (VRKGLNEGYDRRPLASMSLPPPKASPEKCDQPRPGL) are disordered. 2 stretches are compositionally biased toward basic and acidic residues: residues 347 to 356 (GLNEGYDRRP) and 368 to 379 (SPEKCDQPRPGL).

Interacts with CCT5. As to expression, testis specific.

It localises to the nucleus. May be involved (but not essential) in spermatogenesis. The chain is Sperm microtubule associated protein 2 from Homo sapiens (Human).